Reading from the N-terminus, the 240-residue chain is Transmembrane emp24 domain-containing protein 6 (240 aa).

The first 21 residues, M1–S21, serve as a signal peptide directing secretion. Residues Q22–Y200 are Lumenal-facing. Residues T53–V138 form the GOLD domain. N107 and N156 each carry an N-linked (GlcNAc...) asparagine glycan. The helical transmembrane segment at V201–L223 threads the bilayer. Residues K224–C240 are Cytoplasmic-facing.

Belongs to the EMP24/GP25L family.

It is found in the endoplasmic reticulum membrane. The protein is Transmembrane emp24 domain-containing protein 6 (TMED6) of Homo sapiens (Human).